A 780-amino-acid polypeptide reads, in one-letter code: Dynamin-related protein 3B (780 aa).

The residue at position 2 (S2) is an N-acetylserine. A Dynamin-type G domain is found at 40–315 (TIALPQVAVV…LVQHIKALLP (276 aa)). The tract at residues 50–57 (GSQSSGKS) is G1 motif. Residue 50–57 (GSQSSGKS) participates in GTP binding. Residues 76-78 (CTR) are G2 motif. The G3 motif stretch occupies residues 157-160 (DLPG). GTP contacts are provided by residues 157 to 161 (DLPGI) and 226 to 229 (TKLD). A G4 motif region spans residues 226-229 (TKLD). The G5 motif stretch occupies residues 256–259 (VNRS). Disordered stretches follow at residues 536–558 (PVAR…QIKT) and 573–592 (QAVP…STSW). A compositionally biased stretch (basic and acidic residues) spans 539–548 (RPRDTVEPER). A compositionally biased stretch (polar residues) spans 549–558 (TASSGSQIKT). The 92-residue stretch at 654 to 745 (IEITKLLLKS…TLDELPLEAE (92 aa)) folds into the GED domain. The span at 753–770 (IGSEAKHEELPGTRRSRT) shows a compositional bias: basic and acidic residues. Residues 753–780 (IGSEAKHEELPGTRRSRTETNGNGRLHM) form a disordered region. Residues 771–780 (ETNGNGRLHM) are compositionally biased toward polar residues.

This sequence belongs to the TRAFAC class dynamin-like GTPase superfamily. Dynamin/Fzo/YdjA family. Interacts with ARC5 on peroxisomes and ELM1 on mitochondria.

The protein localises to the mitochondrion. The protein resides in the peroxisome. In terms of biological role, involved in the control of mitochondrial and peroxisomal division and morphology. The chain is Dynamin-related protein 3B (DRP3B) from Arabidopsis thaliana (Mouse-ear cress).